The chain runs to 472 residues: Cysteine--tRNA ligase (472 aa).

Position 27 (Cys27) interacts with Zn(2+). The short motif at 29-39 (PTVYNLIHIGN) is the 'HIGH' region element. Zn(2+) contacts are provided by Cys214, His239, and Glu243. Residues 271-275 (KMSKS) carry the 'KMSKS' region motif. Lys274 contacts ATP.

Belongs to the class-I aminoacyl-tRNA synthetase family. Monomer. Zn(2+) serves as cofactor.

Its subcellular location is the cytoplasm. The catalysed reaction is tRNA(Cys) + L-cysteine + ATP = L-cysteinyl-tRNA(Cys) + AMP + diphosphate. The chain is Cysteine--tRNA ligase from Lachnospira eligens (strain ATCC 27750 / DSM 3376 / VPI C15-48 / C15-B4) (Eubacterium eligens).